Here is a 102-residue protein sequence, read N- to C-terminus: uncharacterized protein (102 aa).

This is an uncharacterized protein from Sulfolobus islandicus rod-shaped virus 1 (SIRV-1).